The following is a 572-amino-acid chain: Proline--tRNA ligase (572 aa).

Belongs to the class-II aminoacyl-tRNA synthetase family. ProS type 1 subfamily. Homodimer.

The protein resides in the cytoplasm. The catalysed reaction is tRNA(Pro) + L-proline + ATP = L-prolyl-tRNA(Pro) + AMP + diphosphate. Its function is as follows. Catalyzes the attachment of proline to tRNA(Pro) in a two-step reaction: proline is first activated by ATP to form Pro-AMP and then transferred to the acceptor end of tRNA(Pro). As ProRS can inadvertently accommodate and process non-cognate amino acids such as alanine and cysteine, to avoid such errors it has two additional distinct editing activities against alanine. One activity is designated as 'pretransfer' editing and involves the tRNA(Pro)-independent hydrolysis of activated Ala-AMP. The other activity is designated 'posttransfer' editing and involves deacylation of mischarged Ala-tRNA(Pro). The misacylated Cys-tRNA(Pro) is not edited by ProRS. The protein is Proline--tRNA ligase of Pectobacterium carotovorum subsp. carotovorum (strain PC1).